The chain runs to 105 residues: Insulin-like peptide 7 (105 aa).

The signal sequence occupies residues 1–18 (MPPIILVFFLVLIPASQQ). A propeptide spanning residues 19–57 (YPFSLESLNDQIINEEVIEYMLENSIRSSRTRRVPDEKK) is cleaved from the precursor. Disulfide bonds link Cys61-Cys90, Cys73-Cys103, Cys77-Cys104, and Cys89-Cys94.

This sequence belongs to the insulin family.

It is found in the secreted. In terms of biological role, insulin-like peptide which plays a role in ageing as a consequence of daf-16 activity. The chain is Insulin-like peptide 7 from Caenorhabditis elegans.